The chain runs to 567 residues: Amino-acid acetyltransferase, mitochondrial (567 aa).

In terms of domain architecture, N-acetyltransferase spans 392–558; that stretch reads KDSPQTNPLH…ARLKEYAKHI (167 aa).

This sequence belongs to the acetyltransferase family.

It localises to the mitochondrion. The catalysed reaction is L-glutamate + acetyl-CoA = N-acetyl-L-glutamate + CoA + H(+). It participates in amino-acid biosynthesis; L-arginine biosynthesis; N(2)-acetyl-L-ornithine from L-glutamate: step 1/4. N-acetylglutamate synthase involved in arginine biosynthesis. The sequence is that of Amino-acid acetyltransferase, mitochondrial (ARG2) from Vanderwaltozyma polyspora (strain ATCC 22028 / DSM 70294 / BCRC 21397 / CBS 2163 / NBRC 10782 / NRRL Y-8283 / UCD 57-17) (Kluyveromyces polysporus).